Here is a 462-residue protein sequence, read N- to C-terminus: Argininosuccinate lyase (462 aa).

Belongs to the lyase 1 family. Argininosuccinate lyase subfamily.

It localises to the cytoplasm. It carries out the reaction 2-(N(omega)-L-arginino)succinate = fumarate + L-arginine. Its pathway is amino-acid biosynthesis; L-arginine biosynthesis; L-arginine from L-ornithine and carbamoyl phosphate: step 3/3. The chain is Argininosuccinate lyase from Hydrogenovibrio crunogenus (strain DSM 25203 / XCL-2) (Thiomicrospira crunogena).